A 563-amino-acid chain; its full sequence is DEAD-box ATP-dependent RNA helicase 25 (563 aa).

Residues 21 to 57 (KKLTSDEDGSGKLVKDNNKSLKRGREGKSDVDEPLIK) are disordered. The span at 23-56 (LTSDEDGSGKLVKDNNKSLKRGREGKSDVDEPLI) shows a compositional bias: basic and acidic residues. Ser-25 carries the post-translational modification Phosphoserine. The Q motif motif lies at 80–108 (TRFDQFPLSPLTLKGIEDAGFKTMTVVQE). The region spanning 111-294 (LPLILQGKDI…HVALKRDHEF (184 aa)) is the Helicase ATP-binding domain. Residue 124–131 (AKTGTGKT) coordinates ATP. The DEAD box motif lies at 242-245 (DEAD). Positions 328–479 (LLKKHITDNV…AVKKVQKGLI (152 aa)) constitute a Helicase C-terminal domain.

This sequence belongs to the DEAD box helicase family.

The catalysed reaction is ATP + H2O = ADP + phosphate + H(+). The sequence is that of DEAD-box ATP-dependent RNA helicase 25 (RH25) from Arabidopsis thaliana (Mouse-ear cress).